Reading from the N-terminus, the 696-residue chain is DNA ligase (696 aa).

Residues 36 to 40 (DAVYD), 85 to 86 (SL), and glutamate 124 each bind NAD(+). Lysine 126 (N6-AMP-lysine intermediate) is an active-site residue. NAD(+) is bound by residues arginine 147, glutamate 184, lysine 308, and lysine 332. Residues cysteine 426, cysteine 429, cysteine 444, and cysteine 449 each contribute to the Zn(2+) site. A BRCT domain is found at 618–696 (QRTVSLQGQT…EEELLKLLAS (79 aa)).

This sequence belongs to the NAD-dependent DNA ligase family. LigA subfamily. It depends on Mg(2+) as a cofactor. Mn(2+) serves as cofactor.

It catalyses the reaction NAD(+) + (deoxyribonucleotide)n-3'-hydroxyl + 5'-phospho-(deoxyribonucleotide)m = (deoxyribonucleotide)n+m + AMP + beta-nicotinamide D-nucleotide.. Functionally, DNA ligase that catalyzes the formation of phosphodiester linkages between 5'-phosphoryl and 3'-hydroxyl groups in double-stranded DNA using NAD as a coenzyme and as the energy source for the reaction. It is essential for DNA replication and repair of damaged DNA. This chain is DNA ligase, found in Prochlorococcus marinus (strain MIT 9303).